Consider the following 239-residue polypeptide: Cysteine-rich venom protein kaouthin-1 (239 aa).

An N-terminal signal peptide occupies residues 1–18 (MIAFSLLCLAAVLRQSFG). Residues 37-165 (VDLHNSLRRR…AWSYFYVCQY (129 aa)) form the SCP domain. Intrachain disulfides connect Cys-74-Cys-152, Cys-91-Cys-166, Cys-147-Cys-163, Cys-185-Cys-192, Cys-188-Cys-197, Cys-201-Cys-234, Cys-210-Cys-228, and Cys-219-Cys-232. The 34-residue stretch at 201–234 (CTIYNKLTNCDSLLKQGSCQDDWIKSNCPASCFC) folds into the ShKT domain.

Belongs to the CRISP family. Expressed by the venom gland.

The protein resides in the secreted. In terms of biological role, inhibits calcium-activated potassium channels (KCa), voltage-gated potassium channel (Kv), and the calcium release channel/ryanodine receptor (RyR). This chain is Cysteine-rich venom protein kaouthin-1, found in Naja kaouthia (Monocled cobra).